Consider the following 437-residue polypeptide: Ribosomal protein uS12 methylthiotransferase RimO (437 aa).

In terms of domain architecture, MTTase N-terminal spans 5 to 116 (PTISVSHLGC…IAEVIQRVET (112 aa)). Residues cysteine 14, cysteine 50, cysteine 79, cysteine 154, cysteine 158, and cysteine 161 each contribute to the [4Fe-4S] cluster site. In terms of domain architecture, Radical SAM core spans 140–369 (TTNEAVAYLR…MEIQQPIAAK (230 aa)). The TRAM domain maps to 372 to 437 (QKCVGQTVEV…DVYDLYGKVI (66 aa)).

It belongs to the methylthiotransferase family. RimO subfamily. [4Fe-4S] cluster serves as cofactor.

It localises to the cytoplasm. The catalysed reaction is L-aspartate(89)-[ribosomal protein uS12]-hydrogen + (sulfur carrier)-SH + AH2 + 2 S-adenosyl-L-methionine = 3-methylsulfanyl-L-aspartate(89)-[ribosomal protein uS12]-hydrogen + (sulfur carrier)-H + 5'-deoxyadenosine + L-methionine + A + S-adenosyl-L-homocysteine + 2 H(+). Its function is as follows. Catalyzes the methylthiolation of an aspartic acid residue of ribosomal protein uS12. In Crocosphaera subtropica (strain ATCC 51142 / BH68) (Cyanothece sp. (strain ATCC 51142)), this protein is Ribosomal protein uS12 methylthiotransferase RimO.